The following is a 241-amino-acid chain: Orotidine 5'-phosphate decarboxylase (241 aa).

Substrate contacts are provided by residues Asp-18, Lys-39, 66-75, Thr-130, Arg-192, Gln-201, Gly-221, and Arg-222; that span reads DLKFHDIPAT. Lys-68 serves as the catalytic Proton donor.

The protein belongs to the OMP decarboxylase family. Type 1 subfamily. As to quaternary structure, homodimer.

The enzyme catalyses orotidine 5'-phosphate + H(+) = UMP + CO2. Its pathway is pyrimidine metabolism; UMP biosynthesis via de novo pathway; UMP from orotate: step 2/2. Catalyzes the decarboxylation of orotidine 5'-monophosphate (OMP) to uridine 5'-monophosphate (UMP). This Synechococcus sp. (strain CC9605) protein is Orotidine 5'-phosphate decarboxylase.